A 206-amino-acid polypeptide reads, in one-letter code: Anti-sigma-W factor RsiW (206 aa).

Over 1 to 87 (MSCPEHIVQL…ASINRWLKAH (87 aa)) the chain is Cytoplasmic. Zn(2+)-binding residues include His-30, Cys-34, and Cys-37. Residues 88-108 (PFLVAAALFAILMGGSFFSSW) form a helical membrane-spanning segment. Residues 109–206 (KNDHDFSVSS…SVFGVKESKE (98 aa)) are Extracellular-facing.

It belongs to the zinc-associated anti-sigma factor (ZAS) superfamily. Anti-sigma-W factor family. Requires Zn(2+) as cofactor. In terms of processing, is processed by three successive proteolytic events. First, the extracellular region of RsiW is cleaved by PrsW (Site-1 cleavage) in response to cell envelope stresses. Next, it undergoes cleavage at an intramembrane site (Site-2 cleavage) mediated by RasP. This cleavage uncovers a cryptic proteolytic tag with conserved alanine residues in the transmembrane segment, that is recognized mainly by the ClpXP protease, which completely degrades the protein in the cytoplasm and leads to the induction of the sigma-W-controlled genes.

The protein resides in the membrane. Is the anti-sigma factor for SigW. The presence of RsiW leads to the inactivation of SigW, and its proteolytic destruction to sigma-W activation. This Bacillus licheniformis (strain ATCC 14580 / DSM 13 / JCM 2505 / CCUG 7422 / NBRC 12200 / NCIMB 9375 / NCTC 10341 / NRRL NRS-1264 / Gibson 46) protein is Anti-sigma-W factor RsiW (rsiW).